The primary structure comprises 420 residues: Exodeoxyribonuclease 7 large subunit (420 aa).

Belongs to the XseA family. As to quaternary structure, heterooligomer composed of large and small subunits.

It is found in the cytoplasm. The enzyme catalyses Exonucleolytic cleavage in either 5'- to 3'- or 3'- to 5'-direction to yield nucleoside 5'-phosphates.. Functionally, bidirectionally degrades single-stranded DNA into large acid-insoluble oligonucleotides, which are then degraded further into small acid-soluble oligonucleotides. This chain is Exodeoxyribonuclease 7 large subunit, found in Helicobacter pylori (strain G27).